The chain runs to 107 residues: Phosphoribosyl-ATP pyrophosphatase (107 aa).

It belongs to the PRA-PH family.

It localises to the cytoplasm. It carries out the reaction 1-(5-phospho-beta-D-ribosyl)-ATP + H2O = 1-(5-phospho-beta-D-ribosyl)-5'-AMP + diphosphate + H(+). It participates in amino-acid biosynthesis; L-histidine biosynthesis; L-histidine from 5-phospho-alpha-D-ribose 1-diphosphate: step 2/9. This Agrobacterium fabrum (strain C58 / ATCC 33970) (Agrobacterium tumefaciens (strain C58)) protein is Phosphoribosyl-ATP pyrophosphatase (hisE).